Here is a 671-residue protein sequence, read N- to C-terminus: Condensin complex subunit 2 (671 aa).

A compositionally biased stretch (polar residues) spans 1-24 (MDESLTPNPKQKPASTTTRIQAPT). Disordered regions lie at residues 1–33 (MDESLTPNPKQKPASTTTRIQAPTSPFFLGSND), 404–444 (NSWA…KQAE), and 510–564 (RRKN…ISQP). The Kleisin-gamma middle domain (GM domain) involved in chromosome-binding signature appears at 406 to 415 (WAGPDHWKYR). Residues 536-556 (VYDDDDGPFDDNENDQSDAED) show a composition bias toward acidic residues.

The protein belongs to the CND2 (condensin subunit 2) family. Component of the condensin complex. As to expression, mostly expressed in flower buds and flowers, and, to a lower extent, in roots, stems, leaves and seedlings.

The protein resides in the cytoplasm. It localises to the chromosome. Regulatory subunit of the condensin complex, a complex required for conversion of interphase chromatin into mitotic-like condense chromosomes. The condensin complex probably introduces positive supercoils into relaxed DNA in the presence of type I topoisomerases and converts nicked DNA into positive knotted forms in the presence of type II topoisomerases. Essential protein. The protein is Condensin complex subunit 2 (CAPH) of Arabidopsis thaliana (Mouse-ear cress).